The following is a 412-amino-acid chain: MIEEEVLKIIKPTEEDKKGIEKVLEIIRERLNKLDFEVEGSFRKGTWLRQDTDVDVFVFYPKDVGKEYLERNALNDIINRIKDLDYTLAYAEHPYVIVNINNVEVDIVPALRVESGDRAITAVDRTPFHTKYVTSHLDERGKDEVRLLKRFMKGIGVYGAELKVQGFSGYATELLVIYYGSFRKVLEAASKWKHPIKIELTKPMRAFSEPLIIPDPVDPRRNVTAAVSLKNIATFSVAAKYYLKNPSMEFFFPSKKVEEKIKGDVLILRLNLDEKSSEDIIWGQIKRSVNKIERALKQSGFRVIDIQAWGDTSNIVIAVQLESKNIGQYYLNIGPQYYSETIDDFIQKNDNIWVGEDGRLYSIKERKEYNAEAIAKKNIVLKVKYNIESYWLQNTEDQQIMKFLRKTPTWLK.

Positions 41 and 44 each coordinate ATP. The CTP site is built by serine 41 and lysine 44. The Mg(2+) site is built by aspartate 53, aspartate 55, and aspartate 106. The ATP site is built by histidine 129, lysine 149, and tyrosine 158. Residues histidine 129, lysine 149, and tyrosine 158 each contribute to the CTP site.

Belongs to the tRNA nucleotidyltransferase/poly(A) polymerase family. Archaeal CCA-adding enzyme subfamily. As to quaternary structure, homodimer. Forms a tetramer upon binding two tRNAs. However, tRNA-induced tetramer formation is not required for CCA addition. Requires Mg(2+) as cofactor.

It catalyses the reaction a tRNA precursor + 2 CTP + ATP = a tRNA with a 3' CCA end + 3 diphosphate. The catalysed reaction is a tRNA with a 3' CCA end + 2 CTP + ATP = a tRNA with a 3' CCACCA end + 3 diphosphate. Functionally, catalyzes the addition and repair of the essential 3'-terminal CCA sequence in tRNAs without using a nucleic acid template. Adds these three nucleotides in the order of C, C, and A to the tRNA nucleotide-73, using CTP and ATP as substrates and producing inorganic pyrophosphate. tRNA 3'-terminal CCA addition is required both for tRNA processing and repair. Also involved in tRNA surveillance by mediating tandem CCA addition to generate a CCACCA at the 3' terminus of unstable tRNAs. While stable tRNAs receive only 3'-terminal CCA, unstable tRNAs are marked with CCACCA and rapidly degraded. The structural flexibility of RNA controls the choice between CCA versus CCACCA addition: following the first CCA addition cycle, nucleotide-binding to the active site triggers a clockwise screw motion, producing torque on the RNA. This ejects stable RNAs, whereas unstable RNAs are refolded while bound to the enzyme and subjected to a second CCA catalytic cycle. This Saccharolobus shibatae (strain ATCC 51178 / DSM 5389 / JCM 8931 / NBRC 15437 / B12) (Sulfolobus shibatae) protein is CCA-adding enzyme.